Consider the following 323-residue polypeptide: MFATQTRINQNFNSIPDDLFEAIADLKKELNAVILAHYYQEPDIQDIADYIGDSLGLSQKAAETDADVIVFAGVHFMAETAKILNPNKLVLLPDLDAGCSLADSCPPEEFGKFKAAHPDAIVVSYINCTAAIKAMSDIICTSSNSVKIVKQIPTDQPIIFAPDKNLGRYVMEQTGRDLILWSGSCIVHETFSEKKIVQLKIEHPEAEIIAHPECEPNLLRHANYIGSTTALLKYCQESQEQEFIVATEPGIIHQMQKREPKKNFIPAPAMNNCACNECPHMRLNNLEKLYLAMKNKTPEIMIPEETRVAALKPIQKMLELSFT.

Residues H37 and S54 each contribute to the iminosuccinate site. C99 provides a ligand contact to [4Fe-4S] cluster. Iminosuccinate contacts are provided by residues 125-127 (YIN) and S142. Residue C185 coordinates [4Fe-4S] cluster. Residues 211-213 (HPE) and T228 contribute to the iminosuccinate site. [4Fe-4S] cluster is bound at residue C278.

This sequence belongs to the quinolinate synthase family. Type 2 subfamily. [4Fe-4S] cluster serves as cofactor.

The protein resides in the cytoplasm. The enzyme catalyses iminosuccinate + dihydroxyacetone phosphate = quinolinate + phosphate + 2 H2O + H(+). The protein operates within cofactor biosynthesis; NAD(+) biosynthesis; quinolinate from iminoaspartate: step 1/1. Catalyzes the condensation of iminoaspartate with dihydroxyacetone phosphate to form quinolinate. In Trichodesmium erythraeum (strain IMS101), this protein is Quinolinate synthase.